A 399-amino-acid polypeptide reads, in one-letter code: A-type ATP synthase subunit C (399 aa).

Belongs to the V-ATPase V0D/AC39 subunit family. The A-type ATPase is composed of subunits A(3), B(3), C, D, E(1 or 2), F, H(2), I and K(x).

The protein resides in the cell membrane. Functionally, component of the A-type ATP synthase that produces ATP from ADP in the presence of a proton gradient across the membrane. This Methanocaldococcus jannaschii (strain ATCC 43067 / DSM 2661 / JAL-1 / JCM 10045 / NBRC 100440) (Methanococcus jannaschii) protein is A-type ATP synthase subunit C.